Consider the following 414-residue polypeptide: 2,3-diketo-5-methylthiopentyl-1-phosphate enolase (414 aa).

Catalysis depends on K99, which acts as the Proton acceptor. Substrate-binding positions include K148, 174-177, H265, G338, and 360-361; these read KDDE and GG. Residues K174, D176, and E177 each coordinate Mg(2+). K174 bears the N6-carboxylysine mark.

This sequence belongs to the RuBisCO large chain family. Type IV subfamily. Homodimer. The cofactor is Mg(2+).

It catalyses the reaction 5-methylsulfanyl-2,3-dioxopentyl phosphate = 2-hydroxy-5-methylsulfanyl-3-oxopent-1-enyl phosphate. The protein operates within amino-acid biosynthesis; L-methionine biosynthesis via salvage pathway; L-methionine from S-methyl-5-thio-alpha-D-ribose 1-phosphate: step 3/6. Its function is as follows. Catalyzes the enolization of 2,3-diketo-5-methylthiopentyl-1-phosphate (DK-MTP-1-P) into 2-hydroxy-3-keto-5-methylthiopentenyl-1-phosphate (HK-MTPenyl-1-P). This is 2,3-diketo-5-methylthiopentyl-1-phosphate enolase from Bacillus cereus (strain Q1).